The following is a 354-amino-acid chain: DNA repair protein rhp57 (354 aa).

100–107 serves as a coordination point for ATP; the sequence is GESGSGKS.

The protein belongs to the RecA family.

The protein resides in the nucleus. Its function is as follows. Involved in recombination DNA repair and in the repair of gamma-ray-induced damage. The protein is DNA repair protein rhp57 (rhp57) of Schizosaccharomyces pombe (strain 972 / ATCC 24843) (Fission yeast).